Reading from the N-terminus, the 602-residue chain is Phosphoenolpyruvate carboxykinase [GTP] (602 aa).

Residues arginine 89 and 211–213 (YAG) each bind substrate. 2 residues coordinate Mn(2+): lysine 220 and histidine 239. Serine 260 contributes to the substrate binding site. Position 261-266 (261-266 (GSGKTS)) interacts with GTP. Serine 262 is a catalytic residue. Mn(2+) is bound at residue aspartate 277. Substrate is bound at residue 367–369 (NAR). 2 residues coordinate GTP: arginine 369 and arginine 400.

It belongs to the phosphoenolpyruvate carboxykinase [GTP] family. Mn(2+) serves as cofactor.

The protein resides in the cytoplasm. It catalyses the reaction oxaloacetate + GTP = phosphoenolpyruvate + GDP + CO2. It participates in carbohydrate biosynthesis; gluconeogenesis. Functionally, catalyzes the conversion of oxaloacetate (OAA) to phosphoenolpyruvate (PEP), the rate-limiting step in the metabolic pathway that produces glucose from lactate and other precursors derived from the citric acid cycle. This is Phosphoenolpyruvate carboxykinase [GTP] from Sulfurisphaera tokodaii (strain DSM 16993 / JCM 10545 / NBRC 100140 / 7) (Sulfolobus tokodaii).